Consider the following 300-residue polypeptide: Ornithine carbamoyltransferase (300 aa).

Residues 49–52 (STRT), Gln76, Arg100, and 127–130 (HPCQ) each bind carbamoyl phosphate. L-ornithine-binding positions include Asn158, Asp218, and 222-223 (SM). Carbamoyl phosphate-binding positions include 258–259 (CL) and Arg286.

The protein belongs to the aspartate/ornithine carbamoyltransferase superfamily. OTCase family.

It localises to the cytoplasm. The enzyme catalyses carbamoyl phosphate + L-ornithine = L-citrulline + phosphate + H(+). The protein operates within amino-acid biosynthesis; L-arginine biosynthesis; L-arginine from L-ornithine and carbamoyl phosphate: step 1/3. Functionally, reversibly catalyzes the transfer of the carbamoyl group from carbamoyl phosphate (CP) to the N(epsilon) atom of ornithine (ORN) to produce L-citrulline. The polypeptide is Ornithine carbamoyltransferase (Oleidesulfovibrio alaskensis (strain ATCC BAA-1058 / DSM 17464 / G20) (Desulfovibrio alaskensis)).